A 205-amino-acid chain; its full sequence is Holliday junction branch migration complex subunit RuvA (205 aa).

Residues 1 to 64 (MIGRIRGLLV…EDAQLLYGFI (64 aa)) are domain I. A domain II region spans residues 65 to 143 (SKQERALFRL…SLMEASVGSE (79 aa)). A flexible linker region spans residues 144 to 156 (REFMLQSNYTAPV). The domain III stretch occupies residues 157 to 205 (VANTAEEDAIAALLSLGYKPAQASKAVSAVYVDGIDSESLIKSALKSML).

The protein belongs to the RuvA family. Homotetramer. Forms an RuvA(8)-RuvB(12)-Holliday junction (HJ) complex. HJ DNA is sandwiched between 2 RuvA tetramers; dsDNA enters through RuvA and exits via RuvB. An RuvB hexamer assembles on each DNA strand where it exits the tetramer. Each RuvB hexamer is contacted by two RuvA subunits (via domain III) on 2 adjacent RuvB subunits; this complex drives branch migration. In the full resolvosome a probable DNA-RuvA(4)-RuvB(12)-RuvC(2) complex forms which resolves the HJ.

It localises to the cytoplasm. In terms of biological role, the RuvA-RuvB-RuvC complex processes Holliday junction (HJ) DNA during genetic recombination and DNA repair, while the RuvA-RuvB complex plays an important role in the rescue of blocked DNA replication forks via replication fork reversal (RFR). RuvA specifically binds to HJ cruciform DNA, conferring on it an open structure. The RuvB hexamer acts as an ATP-dependent pump, pulling dsDNA into and through the RuvAB complex. HJ branch migration allows RuvC to scan DNA until it finds its consensus sequence, where it cleaves and resolves the cruciform DNA. This is Holliday junction branch migration complex subunit RuvA from Shewanella piezotolerans (strain WP3 / JCM 13877).